We begin with the raw amino-acid sequence, 86 residues long: Exodeoxyribonuclease 7 small subunit (86 aa).

It belongs to the XseB family. As to quaternary structure, heterooligomer composed of large and small subunits.

The protein resides in the cytoplasm. It carries out the reaction Exonucleolytic cleavage in either 5'- to 3'- or 3'- to 5'-direction to yield nucleoside 5'-phosphates.. Bidirectionally degrades single-stranded DNA into large acid-insoluble oligonucleotides, which are then degraded further into small acid-soluble oligonucleotides. This Bacillus licheniformis (strain ATCC 14580 / DSM 13 / JCM 2505 / CCUG 7422 / NBRC 12200 / NCIMB 9375 / NCTC 10341 / NRRL NRS-1264 / Gibson 46) protein is Exodeoxyribonuclease 7 small subunit.